Consider the following 637-residue polypeptide: Chaperone protein DnaK (637 aa).

Position 196 is a phosphothreonine; by autocatalysis (Thr-196). Residues 598–637 (AEAPGADAPEGQAPQDGGSKKGGEGAVENAEYEVIDGDGK) form a disordered region. Over residues 627–637 (AEYEVIDGDGK) the composition is skewed to acidic residues.

Belongs to the heat shock protein 70 family.

Functionally, acts as a chaperone. The sequence is that of Chaperone protein DnaK from Chlorobium luteolum (strain DSM 273 / BCRC 81028 / 2530) (Pelodictyon luteolum).